A 125-amino-acid polypeptide reads, in one-letter code: Small ribosomal subunit protein uS12 (125 aa).

3-methylthioaspartic acid is present on Asp-89. The tract at residues 104–125 (TAGVKDRSQSRSKYGAKASKQD) is disordered.

It belongs to the universal ribosomal protein uS12 family. Part of the 30S ribosomal subunit. Contacts proteins S8 and S17. May interact with IF1 in the 30S initiation complex.

In terms of biological role, with S4 and S5 plays an important role in translational accuracy. Interacts with and stabilizes bases of the 16S rRNA that are involved in tRNA selection in the A site and with the mRNA backbone. Located at the interface of the 30S and 50S subunits, it traverses the body of the 30S subunit contacting proteins on the other side and probably holding the rRNA structure together. The combined cluster of proteins S8, S12 and S17 appears to hold together the shoulder and platform of the 30S subunit. The chain is Small ribosomal subunit protein uS12 from Prochlorococcus marinus (strain MIT 9303).